We begin with the raw amino-acid sequence, 213 residues long: Protein-L-isoaspartate O-methyltransferase (213 aa).

The active site involves serine 58.

Belongs to the methyltransferase superfamily. L-isoaspartyl/D-aspartyl protein methyltransferase family.

It localises to the cytoplasm. The catalysed reaction is [protein]-L-isoaspartate + S-adenosyl-L-methionine = [protein]-L-isoaspartate alpha-methyl ester + S-adenosyl-L-homocysteine. Its function is as follows. Catalyzes the methyl esterification of L-isoaspartyl residues in peptides and proteins that result from spontaneous decomposition of normal L-aspartyl and L-asparaginyl residues. It plays a role in the repair and/or degradation of damaged proteins. The polypeptide is Protein-L-isoaspartate O-methyltransferase (Chlorobaculum tepidum (strain ATCC 49652 / DSM 12025 / NBRC 103806 / TLS) (Chlorobium tepidum)).